The chain runs to 328 residues: Formyltetrahydrofolate deformylase 2, mitochondrial (328 aa).

The transit peptide at 1-12 (MIRRVSTTSCLS) directs the protein to the mitochondrion. The ACT domain maps to 46–129 (FHVFHCPDVV…SVVRVPSLDP (84 aa)). Asp-272 is an active-site residue.

This sequence belongs to the PurU family. In terms of tissue distribution, expressed in leaves, cotyledons, roots, seeds and flowers.

The protein localises to the mitochondrion. It catalyses the reaction (6R)-10-formyltetrahydrofolate + H2O = (6S)-5,6,7,8-tetrahydrofolate + formate + H(+). Deformylase involved in photorespiration. Prevents excessive accumulation of 5-formyl tetrahydrofolate (THF), a potent inhibitor of the Gly decarboxylase/Ser hydroxymethyltransferase complex. In Arabidopsis thaliana (Mouse-ear cress), this protein is Formyltetrahydrofolate deformylase 2, mitochondrial (PURU2).